The following is a 410-amino-acid chain: Peptidase T (410 aa).

His-79 is a binding site for Zn(2+). The active site involves Asp-81. Asp-142 is a Zn(2+) binding site. The Proton acceptor role is filled by Glu-176. Residues Glu-177, Asp-199, and His-381 each coordinate Zn(2+).

The protein belongs to the peptidase M20B family. Requires Zn(2+) as cofactor.

Its subcellular location is the cytoplasm. The catalysed reaction is Release of the N-terminal residue from a tripeptide.. Cleaves the N-terminal amino acid of tripeptides. In Bacillus cereus (strain ATCC 10987 / NRS 248), this protein is Peptidase T.